The chain runs to 153 residues: UPF0178 protein Sfum_1097 (153 aa).

Belongs to the UPF0178 family.

In Syntrophobacter fumaroxidans (strain DSM 10017 / MPOB), this protein is UPF0178 protein Sfum_1097.